Reading from the N-terminus, the 290-residue chain is Sodium/potassium-transporting ATPase subunit beta-2 (290 aa).

Residues 1-39 (MVIQKEKKSCGQVVEEWKEFVWNPRTHQFMGRTGTSWAF) are Cytoplasmic-facing. Residues 40-67 (ILLFYLVFYGFLTAMFTLTMWVMLQTVS) traverse the membrane as a helical; Signal-anchor for type II membrane protein segment. Residues 68–290 (DHTPKYQDRL…VAFKLRINKA (223 aa)) are Extracellular-facing. N96 and N118 each carry an N-linked (GlcNAc...) asparagine glycan. C129 and C150 are oxidised to a cystine. N153 and N159 each carry an N-linked (GlcNAc...) asparagine glycan. A disulfide bond links C160 and C177. Residues N193, N197, and N238 are each glycosylated (N-linked (GlcNAc...) asparagine). Residues 193 to 290 (NQSMNVTCVG…VAFKLRINKA (98 aa)) are immunoglobulin-like. A disulfide bridge connects residues C200 and C261.

The protein belongs to the X(+)/potassium ATPases subunit beta family. In terms of assembly, the sodium/potassium-transporting ATPase is composed of a catalytic alpha subunit, an auxiliary non-catalytic beta subunit and an additional regulatory subunit. Interacts with isoform 2 of BSG. In terms of tissue distribution, highly expressed in brain (at protein level).

The protein resides in the cell membrane. Its function is as follows. This is the non-catalytic component of the active enzyme, which catalyzes the hydrolysis of ATP coupled with the exchange of Na(+) and K(+) ions across the plasma membrane. The exact function of the beta-2 subunit is not known. Functionally, mediates cell adhesion of neurons and astrocytes, and promotes neurite outgrowth. In Rattus norvegicus (Rat), this protein is Sodium/potassium-transporting ATPase subunit beta-2 (Atp1b2).